An 83-amino-acid polypeptide reads, in one-letter code: Hainantoxin-III (83 aa).

A signal peptide spans 1 to 21 (MKASMFLALAGLVLLFVVGYA). Residues 22-48 (SESEEKEFPRELLSKIFALDDFKGEER) constitute a propeptide that is removed on maturation. 3 disulfides stabilise this stretch: Cys50/Cys65, Cys57/Cys70, and Cys64/Cys77. Leu81 carries the leucine amide modification.

This sequence belongs to the neurotoxin 10 (Hwtx-1) family. 15 (Hntx-3) subfamily. Monomer. In terms of tissue distribution, expressed by the venom gland.

It localises to the secreted. Selective antagonist of neuronal tetrodotoxin (TTX)-sensitive voltage-gated sodium channels (IC(50)=1270 nM on Nav1.1/SCN1A, 270 nM on Nav1.2/SCN2A, 491 nM on Nav1.3/SCN3A and 232 nM on Nav1.7/SCN9A). This toxin suppress Nav1.7 current amplitude without significantly altering the activation, inactivation, and repriming kinetics. Short extreme depolarizations partially activate the toxin-bound channel, indicating voltage-dependent inhibition of this toxin. This toxin increases the deactivation of the Nav1.7 current after extreme depolarizations. The toxin-Nav1.7 complex is gradually dissociated upon prolonged strong depolarizations in a voltage-dependent manner, and the unbound toxin rebinds to Nav1.7 after a long repolarization. Moreover, analysis of chimeric channels showed that the DIIS3-S4 linker is critical for toxin binding to Nav1.7. These data are consistent with this toxin interacting with Nav1.7 site 4 and trapping the domain II voltage sensor in the closed state. This is Hainantoxin-III from Cyriopagopus hainanus (Chinese bird spider).